The sequence spans 353 residues: Ferredoxin--NADP reductase (353 aa).

Positions 33, 41, 46, 86, 121, 293, and 333 each coordinate FAD.

It belongs to the ferredoxin--NADP reductase type 2 family. Homodimer. It depends on FAD as a cofactor.

The catalysed reaction is 2 reduced [2Fe-2S]-[ferredoxin] + NADP(+) + H(+) = 2 oxidized [2Fe-2S]-[ferredoxin] + NADPH. This chain is Ferredoxin--NADP reductase, found in Verminephrobacter eiseniae (strain EF01-2).